We begin with the raw amino-acid sequence, 471 residues long: UDP-glycosyltransferase 71A15 (471 aa).

UDP-alpha-D-glucose-binding positions include Ser282, Trp348 to Ala349, His366 to Glu374, and Tyr388 to Gln391.

This sequence belongs to the UDP-glycosyltransferase family.

Its function is as follows. Glycosyltransferase that possesses chalcone and flavonol 2'-O-glycosyltransferase activity. Converts phloretin to phlorizin (phloretin 2'-O-glucoside), a potent antioxidant. Possesses glycosyltransferase activity toward, naringenin, naringenin chalcone, eriodictyol, eriodictyol chalcone, apigenin, luteolin, kaempferol, quercetin, isoliquiritigenin, butein and caffeic acid. Can convert phloretin to phloretin 4'-O-glucoside and phloretin 4-O-glucoside. The protein is UDP-glycosyltransferase 71A15 of Malus domestica (Apple).